The following is a 31-amino-acid chain: Antifungal protein 1 (31 aa).

2 stretches are compositionally biased toward basic and acidic residues: residues 1 to 10 (PGAGSQEERM) and 18 to 31 (DFSHEERFLSMVRE). Positions 1-31 (PGAGSQEERMQGQMEGQDFSHEERFLSMVRE) are disordered.

In terms of assembly, heterodimer; disulfide-linked. Disulfide bonds.

Functionally, has antifungal activity against C.gloeosporioides but not against B.cinerea and Fusarium sp. or against various yeasts. Has no antibacterial activity. This is Antifungal protein 1 from Passiflora alata (Winged-stem passion flower).